The following is a 256-amino-acid chain: MLVVISPAKRLDWAERDVATTEPAFQDDAVRLAKTARNLTLGDLKKLMGLSDDLARLNRDRFREFADAPGADVTRPAALAFAGDTYQGLEAASLDSEEMDWAQQHLRILSGLYGVLRPLDAIQAYRLEMGSRLKTRRGTSLYDYWGDQLSRTLNAQADEIGTDVLVNCASQEYFGAVDPKALKLRVITPVFMEDKGGAPKIVSFFAKKARGAMARYIVQRRLTDPQALSEFDSGGYQYNADLSAPDKPVFLRPYQG.

This sequence belongs to the UPF0246 family.

The polypeptide is UPF0246 protein SPO0106 (Ruegeria pomeroyi (strain ATCC 700808 / DSM 15171 / DSS-3) (Silicibacter pomeroyi)).